The chain runs to 1009 residues: Protein-tyrosine kinase 2-beta (1009 aa).

Residues 39–359 (RILKVCFYSN…GYCRLQGEHK (321 aa)) form the FERM domain. Serine 361, serine 375, and serine 399 each carry phosphoserine. Phosphotyrosine; by autocatalysis is present on tyrosine 402. The Protein kinase domain occupies 425-683 (VVLNRILGEG…ELVCSLSDIY (259 aa)). Residues 431-439 (LGEGFFGEV), lysine 457, and 503-509 (ELYPYGE) contribute to the ATP site. Aspartate 549 functions as the Proton acceptor in the catalytic mechanism. Residue tyrosine 579 is modified to Phosphotyrosine. Phosphotyrosine; by SRC, FYN and LCK is present on tyrosine 580. The interval 696 to 728 (NARYRPPKILEPTTFQEPPPKPSRPKYRPPPQT) is disordered. The segment covering 712-727 (EPPPKPSRPKYRPPPQ) has biased composition (pro residues). Tyrosine 722 bears the Phosphotyrosine mark. Position 762 is a phosphoserine (serine 762). Threonine 765 carries the post-translational modification Phosphothreonine. Positions 801–1009 (KIKMKQVLER…VANLAHPPAE (209 aa)) are interaction with TGFB1I1. Tyrosine 834 carries the post-translational modification Phosphotyrosine. A Phosphoserine modification is found at serine 839. The residue at position 842 (threonine 842) is a Phosphothreonine. A Phosphotyrosine modification is found at tyrosine 849. The residue at position 866 (serine 866) is a Phosphoserine. The focal adhesion targeting (FAT) stretch occupies residues 868 to 1009 (QPTANLDRTD…VANLAHPPAE (142 aa)). The residue at position 881 (tyrosine 881) is a Phosphotyrosine.

The protein belongs to the protein kinase superfamily. Tyr protein kinase family. FAK subfamily. As to quaternary structure, homodimer, or homooligomer. Interacts with KCNA2. Interacts with NPHP1, ASAP1, ASAP2, ARHGAP26, SKAP2 and TGFB1I1. The Tyr-402 phosphorylated form interacts with SRC (via SH2 domain) and SRC family members. Forms a signaling complex with EPHA1, LCK and phosphatidylinositol 3-kinase; upon activation by EFNA1. Interacts with GRB2 (via SH2 domain). Interacts with P53/TP53 and MDM2. Interacts with MYLK. Interacts with BCAR1. Interacts with RB1CC1. Interacts with RHOU. Interacts with VAV1. Interacts with PDPK1. Interacts with DLG4. Interacts with LPXN and PTPN12. Interacts with SIRPA and SH2D3C. Interacts (hypophosphorylated) with PXN. Interacts with ARHGAP10. In terms of processing, phosphorylated on tyrosine residues in response to various stimuli that elevate the intracellular calcium concentration; this activation is indirect and may be mediated by production of reactive oxygen species (ROS). Tyr-402 is the major autophosphorylation site, but other kinases can also phosphorylate Tyr-402. Autophosphorylation occurs in trans, i.e. one subunit of the dimeric receptor phosphorylates tyrosine residues on the other subunit. Phosphorylation at Tyr-402 promotes interaction with SRC and SRC family members, leading to phosphorylation at Tyr-579; Tyr-580 and Tyr-881. Phosphorylation at Tyr-881 is important for interaction with GRB2. Phosphorylated on tyrosine residues upon activation of FGR and PKC. Recruitment by NPHP1 to cell matrix adhesions initiates Tyr-402 phosphorylation. In monocytes, adherence to substrata is required for tyrosine phosphorylation and kinase activation. Angiotensin II, thapsigargin and L-alpha-lysophosphatidic acid (LPA) also induce autophosphorylation and increase kinase activity. Phosphorylation by MYLK promotes ITGB2 activation and is thus essential to trigger neutrophil transmigration during lung injury. Dephosphorylated by PTPN12.

The protein resides in the cytoplasm. It is found in the perinuclear region. Its subcellular location is the cell membrane. It localises to the cell junction. The protein localises to the focal adhesion. The protein resides in the cell projection. It is found in the lamellipodium. Its subcellular location is the cell cortex. It localises to the nucleus. The catalysed reaction is L-tyrosyl-[protein] + ATP = O-phospho-L-tyrosyl-[protein] + ADP + H(+). Activated in response to stimuli that lead to increased intracellular Ca(2+) levels; this activation is indirect and may be mediated by calcium-mediated production of reactive oxygen species (ROS). Activated by autophosphorylation at Tyr-402; this creates a binding site for SRC family kinases and leads to phosphorylation at additional tyrosine residues. Phosphorylation at Tyr-402, Tyr-579 and Tyr-580 is required for optimal kinase activity. Functionally, non-receptor protein-tyrosine kinase that regulates reorganization of the actin cytoskeleton, cell polarization, cell migration, adhesion, spreading and bone remodeling. Plays a role in the regulation of the humoral immune response, and is required for normal levels of marginal B-cells in the spleen and normal migration of splenic B-cells. Required for normal macrophage polarization and migration towards sites of inflammation. Regulates cytoskeleton rearrangement and cell spreading in T-cells, and contributes to the regulation of T-cell responses. Promotes osteoclastic bone resorption; this requires both PTK2B/PYK2 and SRC. May inhibit differentiation and activity of osteoprogenitor cells. Functions in signaling downstream of integrin and collagen receptors, immune receptors, G-protein coupled receptors (GPCR), cytokine, chemokine and growth factor receptors, and mediates responses to cellular stress. Forms multisubunit signaling complexes with SRC and SRC family members upon activation; this leads to the phosphorylation of additional tyrosine residues, creating binding sites for scaffold proteins, effectors and substrates. Regulates numerous signaling pathways. Promotes activation of phosphatidylinositol 3-kinase and of the AKT1 signaling cascade. Promotes activation of NOS3. Regulates production of the cellular messenger cGMP. Promotes activation of the MAP kinase signaling cascade, including activation of MAPK1/ERK2, MAPK3/ERK1 and MAPK8/JNK1. Promotes activation of Rho family GTPases, such as RHOA and RAC1. Recruits the ubiquitin ligase MDM2 to P53/TP53 in the nucleus, and thereby regulates P53/TP53 activity, P53/TP53 ubiquitination and proteasomal degradation. Acts as a scaffold, binding to both PDPK1 and SRC, thereby allowing SRC to phosphorylate PDPK1 at 'Tyr-9, 'Tyr-373', and 'Tyr-376'. Promotes phosphorylation of NMDA receptors by SRC family members, and thereby contributes to the regulation of NMDA receptor ion channel activity and intracellular Ca(2+) levels. May also regulate potassium ion transport by phosphorylation of potassium channel subunits. Phosphorylates SRC; this increases SRC kinase activity. Phosphorylates ASAP1, NPHP1, KCNA2 and SHC1. Promotes phosphorylation of ASAP2, RHOU and PXN; this requires both SRC and PTK2/PYK2. The sequence is that of Protein-tyrosine kinase 2-beta (Ptk2b) from Mus musculus (Mouse).